We begin with the raw amino-acid sequence, 191 residues long: Signal peptidase IB (191 aa).

Topologically, residues methionine 1–glutamate 7 are cytoplasmic. Residues tryptophan 8 to threonine 28 form a helical membrane-spanning segment. The Extracellular portion of the chain corresponds to proline 29–asparagine 191. Residues serine 36 and lysine 77 contribute to the active site.

It belongs to the peptidase S26 family.

The protein resides in the cell membrane. It catalyses the reaction Cleavage of hydrophobic, N-terminal signal or leader sequences from secreted and periplasmic proteins.. Functionally, essential for cell viability. The chain is Signal peptidase IB (spsB) from Staphylococcus aureus (strain Mu50 / ATCC 700699).